The sequence spans 637 residues: Palmitoyltransferase Hip14 (637 aa).

The Cytoplasmic segment spans residues Met1–Arg295. 5 ANK repeats span residues Glu77–Ala106, Leu111–Ile140, Glu144–Leu173, Gly177–Met207, and His212–Val242. A helical transmembrane segment spans residues Trp296–Thr315. Residues Val316–Thr318 are Lumenal-facing. Residues Leu319 to Leu341 traverse the membrane as a helical segment. Residues Phe342 to His345 are Cytoplasmic-facing. A helical transmembrane segment spans residues Leu346 to Trp366. The Lumenal segment spans residues Leu367–Ala373. Residues Val374–Leu394 form a helical membrane-spanning segment. The Cytoplasmic portion of the chain corresponds to Lys395 to His472. One can recognise a DHHC domain in the interval Ser430–Trp480. The active-site S-palmitoyl cysteine intermediate is the Cys460. The chain crosses the membrane as a helical span at residues Ser473–Gly493. The Lumenal segment spans residues Ser494 to Ala520. A helical membrane pass occupies residues Trp521–Ile541. Residues Cys542 to Val637 lie on the Cytoplasmic side of the membrane.

This sequence belongs to the DHHC palmitoyltransferase family. AKR/ZDHHC17 subfamily. As to quaternary structure, interacts with dorsal-ventral patterning protein Sog. In terms of tissue distribution, in stage 13-15 embryos, expressed in the central nervous system. At the third instar larval stage, expressed in the ventral nerve cord and is enriched in the neuropil.

The protein localises to the golgi apparatus membrane. Its subcellular location is the presynaptic cell membrane. The enzyme catalyses L-cysteinyl-[protein] + hexadecanoyl-CoA = S-hexadecanoyl-L-cysteinyl-[protein] + CoA. Functionally, probable palmitoyltransferase which is required for photoreceptor synaptic transmission and for the correct expression and localization of palmitoylated protein Csp and synaptosomal-associated protein Snap25. Probably palmitoylates Csp. Probably also palmitoylates the dorsal-ventral patterning protein Sog and promotes its secretion and activity and the stabilization of the membrane-bound form. Required for synaptic vesicle exocytosis. This Drosophila melanogaster (Fruit fly) protein is Palmitoyltransferase Hip14.